Reading from the N-terminus, the 875-residue chain is Protein SEY1 (875 aa).

The Cytoplasmic portion of the chain corresponds to Met1–Gln749. The GB1/RHD3-type G domain occupies Gly49–Ala307. Gly59–Ser66 serves as a coordination point for GTP. A coiled-coil region spans residues Ser482–Glu506. A disordered region spans residues Leu676–Asp704. The span at Ala690–Asp704 shows a compositional bias: acidic residues. A helical transmembrane segment spans residues Val750 to Leu770. The Lumenal segment spans residues Arg771 to Pro773. Residues Ala774–Leu794 form a helical membrane-spanning segment. The Cytoplasmic portion of the chain corresponds to Trp795 to Phe875. Residues Met831–Phe875 form a disordered region. Residues Ala839 to Asp864 show a composition bias toward basic and acidic residues. Residues Val865–Phe875 are compositionally biased toward acidic residues.

It belongs to the TRAFAC class dynamin-like GTPase superfamily. GB1/RHD3 GTPase family. RHD3 subfamily.

It is found in the endoplasmic reticulum membrane. Its function is as follows. Cooperates with the reticulon proteins and tubule-shaping DP1 family proteins to generate and maintain the structure of the tubular endoplasmic reticulum network. Has GTPase activity, which is required for its function in ER organization. The chain is Protein SEY1 from Ajellomyces dermatitidis (strain ER-3 / ATCC MYA-2586) (Blastomyces dermatitidis).